Reading from the N-terminus, the 200-residue chain is MARYTGPAWKLSRRLGISLSGTGKELEKRPYAPGPHGPNQRKKLSEYGLQLQEKQKLRHMYGMTERQFRRTFDQAGKMPGKHGENFMILLEARLDNLVYRMGLARTRRAARQLVNHGHITVDGARVDIPSYRVKPNQTISVREKSNSLVVVKEAIEVNNFVPEYLTFDADKLEATYTRHAERSELAAEINEALIVEFYSR.

A disordered region spans residues 22 to 42 (TGKELEKRPYAPGPHGPNQRK). The 61-residue stretch at 92 to 152 (ARLDNLVYRM…EKSNSLVVVK (61 aa)) folds into the S4 RNA-binding domain.

Belongs to the universal ribosomal protein uS4 family. As to quaternary structure, part of the 30S ribosomal subunit. Contacts protein S5. The interaction surface between S4 and S5 is involved in control of translational fidelity.

Its function is as follows. One of the primary rRNA binding proteins, it binds directly to 16S rRNA where it nucleates assembly of the body of the 30S subunit. With S5 and S12 plays an important role in translational accuracy. The polypeptide is Small ribosomal subunit protein uS4 (Bacillus mycoides (strain KBAB4) (Bacillus weihenstephanensis)).